The following is a 263-amino-acid chain: HTH-type transcriptional repressor NanR (263 aa).

The HTH gntR-type domain maps to 30–98; sequence KKLSEMVEEE…NGERARVSRP (69 aa). Residues 58 to 77 constitute a DNA-binding region (H-T-H motif); it reads ERELMAFFNVGRPSVREALA.

Belongs to the NanR family.

Its function is as follows. Transcriptional repressor that controls expression of the genes required for the catabolism of sialic acids. The chain is HTH-type transcriptional repressor NanR from Salmonella arizonae (strain ATCC BAA-731 / CDC346-86 / RSK2980).